The following is a 199-amino-acid chain: Protein GrpE (199 aa).

The segment covering 1 to 24 (MSKQNKKDWKKFRDEHKEEHKVEN) has biased composition (basic and acidic residues). A disordered region spans residues 1–52 (MSKQNKKDWKKFRDEHKEEHKVENEILEEETDEESQHQEPALGHPSYTALEE).

The protein belongs to the GrpE family. In terms of assembly, homodimer.

It is found in the cytoplasm. Functionally, participates actively in the response to hyperosmotic and heat shock by preventing the aggregation of stress-denatured proteins, in association with DnaK and GrpE. It is the nucleotide exchange factor for DnaK and may function as a thermosensor. Unfolded proteins bind initially to DnaJ; upon interaction with the DnaJ-bound protein, DnaK hydrolyzes its bound ATP, resulting in the formation of a stable complex. GrpE releases ADP from DnaK; ATP binding to DnaK triggers the release of the substrate protein, thus completing the reaction cycle. Several rounds of ATP-dependent interactions between DnaJ, DnaK and GrpE are required for fully efficient folding. The protein is Protein GrpE of Legionella pneumophila (strain Lens).